Reading from the N-terminus, the 136-residue chain is Galectin-7 (136 aa).

In terms of domain architecture, Galectin spans 6 to 136 (HKTPLPQGVR…DVQLHSVKIF (131 aa)). 70 to 76 (WGREERG) contacts a beta-D-galactoside.

In terms of assembly, monomer.

It localises to the cytoplasm. The protein localises to the nucleus. It is found in the secreted. Could be involved in cell-cell and/or cell-matrix interactions necessary for normal growth control. Pro-apoptotic protein that functions intracellularly upstream of JNK activation and cytochrome c release. This Rattus norvegicus (Rat) protein is Galectin-7 (Lgals7).